Here is a 510-residue protein sequence, read N- to C-terminus: Probable lipid II flippase MurJ (510 aa).

Transmembrane regions (helical) follow at residues 13-33 (DVVI…LFAN), 81-101 (GLVS…AALF), 130-150 (FPYL…NTIG), 154-174 (VMSF…LFLA), 182-202 (LALA…QIPF), 240-260 (INLL…ISWL), 266-286 (LLEF…LPTL), 315-335 (IFLL…PMLL), 357-377 (AFNA…GYYA), 396-416 (MGFN…ASAM), 443-463 (VFFV…WYYV), and 481-501 (LVWL…LLGV).

Belongs to the MurJ/MviN family.

The protein localises to the cell inner membrane. The protein operates within cell wall biogenesis; peptidoglycan biosynthesis. Functionally, involved in peptidoglycan biosynthesis. Transports lipid-linked peptidoglycan precursors from the inner to the outer leaflet of the cytoplasmic membrane. This is Probable lipid II flippase MurJ from Haemophilus influenzae (strain ATCC 51907 / DSM 11121 / KW20 / Rd).